A 495-amino-acid polypeptide reads, in one-letter code: Trimethylamine methyltransferase MttB1 (495 aa).

Pyl334 is a non-standard amino acid (pyrrolysine).

Belongs to the trimethylamine methyltransferase family. Can form a complex with MttC.

It carries out the reaction Co(I)-[trimethylamine-specific corrinoid protein] + trimethylamine + H(+) = methyl-Co(III)-[trimethylamine-specific corrinoid protein] + dimethylamine. Its pathway is one-carbon metabolism; methanogenesis from trimethylamine. Its function is as follows. Catalyzes the transfer of a methyl group from trimethylamine to the corrinoid cofactor of MttC. The chain is Trimethylamine methyltransferase MttB1 (mttB1) from Methanosarcina acetivorans (strain ATCC 35395 / DSM 2834 / JCM 12185 / C2A).